The following is a 603-amino-acid chain: Aspartate--tRNA(Asp/Asn) ligase (603 aa).

Residues 205 to 208 (QLFK) are aspartate. Residue Arg-227 participates in L-aspartate binding. Residues 227–229 (RDE) and Gln-236 each bind ATP. L-aspartate is bound at residue His-463. Glu-497 contributes to the ATP binding site. Position 504 (Arg-504) interacts with L-aspartate. Residue 549–552 (GMDR) coordinates ATP.

It belongs to the class-II aminoacyl-tRNA synthetase family. Type 1 subfamily. In terms of assembly, homodimer.

The protein resides in the cytoplasm. The catalysed reaction is tRNA(Asx) + L-aspartate + ATP = L-aspartyl-tRNA(Asx) + AMP + diphosphate. In terms of biological role, aspartyl-tRNA synthetase with relaxed tRNA specificity since it is able to aspartylate not only its cognate tRNA(Asp) but also tRNA(Asn). Reaction proceeds in two steps: L-aspartate is first activated by ATP to form Asp-AMP and then transferred to the acceptor end of tRNA(Asp/Asn). The chain is Aspartate--tRNA(Asp/Asn) ligase from Anaeromyxobacter sp. (strain K).